A 221-amino-acid polypeptide reads, in one-letter code: Casparian strip membrane protein 3 (221 aa).

The segment covering 1–12 (MDIEKAASRREE) has biased composition (basic and acidic residues). The disordered stretch occupies residues 1–28 (MDIEKAASRREEEEPIVQRPKLDKGKGK). Residues 1–58 (MDIEKAASRREEEEPIVQRPKLDKGKGKAHVFAPPMNYNRIMDKHKQEKVSAAGWKRG) are Cytoplasmic-facing. Residues 59 to 79 (VAIFDFVLRLIAAITAMAAAA) traverse the membrane as a helical segment. Residues 80-109 (KMATTEETLPFFTQFLQFQAEYTDLPTMSS) lie on the Extracellular side of the membrane. A helical membrane pass occupies residues 110 to 130 (FVIVNSIVGGYLTLSLPFSIV). Residues 131-148 (CILRPLAVPPRLFLIICD) are Cytoplasmic-facing. A helical membrane pass occupies residues 149 to 169 (TAMMGLTMMAASASAAIVYLA). Topologically, residues 170–194 (HNGNSSSNWLPVCQQFGDFCQGTSG) are extracellular. Asparagine 173 carries N-linked (GlcNAc...) asparagine glycosylation. Residues 195 to 215 (AVVASFIAATLLMFLVILSAF) form a helical membrane-spanning segment. Residues 216 to 221 (ALKRST) are Cytoplasmic-facing.

The protein belongs to the Casparian strip membrane proteins (CASP) family. In terms of assembly, homodimer and heterodimers.

Its subcellular location is the cell membrane. In terms of biological role, regulates membrane-cell wall junctions and localized cell wall deposition. Required for establishment of the Casparian strip membrane domain (CSD) and the subsequent formation of Casparian strips, a cell wall modification of the root endodermis that determines an apoplastic barrier between the intraorganismal apoplasm and the extraorganismal apoplasm and prevents lateral diffusion. This Arabidopsis lyrata subsp. lyrata (Lyre-leaved rock-cress) protein is Casparian strip membrane protein 3.